A 301-amino-acid polypeptide reads, in one-letter code: 3-methyl-2-oxobutanoate hydroxymethyltransferase (301 aa).

Polar residues predominate over residues 1–12 (MAPSNLPESTTP). The segment at 1-24 (MAPSNLPESTTPAEVPAPYGTGPA) is disordered. Residues Asp82 and Asp121 each coordinate Mg(2+). 3-methyl-2-oxobutanoate contacts are provided by residues 82 to 83 (DS), Asp121, and Lys151. A Mg(2+)-binding site is contributed by Glu153. The Proton acceptor role is filled by Glu219.

Belongs to the PanB family. As to quaternary structure, homodecamer; pentamer of dimers. The cofactor is Mg(2+).

The protein resides in the cytoplasm. It catalyses the reaction 3-methyl-2-oxobutanoate + (6R)-5,10-methylene-5,6,7,8-tetrahydrofolate + H2O = 2-dehydropantoate + (6S)-5,6,7,8-tetrahydrofolate. The protein operates within cofactor biosynthesis; (R)-pantothenate biosynthesis; (R)-pantoate from 3-methyl-2-oxobutanoate: step 1/2. In terms of biological role, catalyzes the reversible reaction in which hydroxymethyl group from 5,10-methylenetetrahydrofolate is transferred onto alpha-ketoisovalerate to form ketopantoate. This Paenarthrobacter aurescens (strain TC1) protein is 3-methyl-2-oxobutanoate hydroxymethyltransferase.